Consider the following 364-residue polypeptide: Dual-specificity RNA methyltransferase RlmN (364 aa).

Residue Glu91 is the Proton acceptor of the active site. In terms of domain architecture, Radical SAM core spans 97-333; that stretch reads ESDRGTLCIS…VTVRKTRGDD (237 aa). A disulfide bridge connects residues Cys104 and Cys338. The [4Fe-4S] cluster site is built by Cys111, Cys115, and Cys118. S-adenosyl-L-methionine contacts are provided by residues 164–165, Ser196, 218–220, and Asn295; these read GE and SLH. The active-site S-methylcysteine intermediate is Cys338.

It belongs to the radical SAM superfamily. RlmN family. It depends on [4Fe-4S] cluster as a cofactor.

It is found in the cytoplasm. The catalysed reaction is adenosine(2503) in 23S rRNA + 2 reduced [2Fe-2S]-[ferredoxin] + 2 S-adenosyl-L-methionine = 2-methyladenosine(2503) in 23S rRNA + 5'-deoxyadenosine + L-methionine + 2 oxidized [2Fe-2S]-[ferredoxin] + S-adenosyl-L-homocysteine. It catalyses the reaction adenosine(37) in tRNA + 2 reduced [2Fe-2S]-[ferredoxin] + 2 S-adenosyl-L-methionine = 2-methyladenosine(37) in tRNA + 5'-deoxyadenosine + L-methionine + 2 oxidized [2Fe-2S]-[ferredoxin] + S-adenosyl-L-homocysteine. Specifically methylates position 2 of adenine 2503 in 23S rRNA and position 2 of adenine 37 in tRNAs. m2A2503 modification seems to play a crucial role in the proofreading step occurring at the peptidyl transferase center and thus would serve to optimize ribosomal fidelity. In Neisseria meningitidis serogroup C (strain 053442), this protein is Dual-specificity RNA methyltransferase RlmN.